The sequence spans 382 residues: D-galactonate dehydratase (382 aa).

Asp-183 serves as a coordination point for Mg(2+). The active-site Proton donor is the His-185. The Mg(2+) site is built by Glu-209 and Glu-235. The active-site Proton acceptor is the His-285.

This sequence belongs to the mandelate racemase/muconate lactonizing enzyme family. GalD subfamily. Mg(2+) serves as cofactor.

It carries out the reaction D-galactonate = 2-dehydro-3-deoxy-D-galactonate + H2O. It participates in carbohydrate acid metabolism; D-galactonate degradation; D-glyceraldehyde 3-phosphate and pyruvate from D-galactonate: step 1/3. In terms of biological role, catalyzes the dehydration of D-galactonate to 2-keto-3-deoxy-D-galactonate. This chain is D-galactonate dehydratase, found in Ralstonia pickettii (strain 12J).